The following is a 307-amino-acid chain: 4-hydroxybenzoate octaprenyltransferase (307 aa).

7 consecutive transmembrane segments (helical) span residues 27 to 47, 50 to 70, 101 to 121, 142 to 162, 179 to 199, 239 to 259, and 285 to 305; these read AGWL…AGGF, WHLL…GCCI, LAVG…TNAL, CVAM…PMAF, AAVP…VLAY, LLAW…AAGL, and FRLN…DLGW.

The protein belongs to the UbiA prenyltransferase family. Mg(2+) is required as a cofactor.

It localises to the cell inner membrane. It carries out the reaction all-trans-octaprenyl diphosphate + 4-hydroxybenzoate = 4-hydroxy-3-(all-trans-octaprenyl)benzoate + diphosphate. It functions in the pathway cofactor biosynthesis; ubiquinone biosynthesis. Its function is as follows. Catalyzes the prenylation of para-hydroxybenzoate (PHB) with an all-trans polyprenyl group. Mediates the second step in the final reaction sequence of ubiquinone-8 (UQ-8) biosynthesis, which is the condensation of the polyisoprenoid side chain with PHB, generating the first membrane-bound Q intermediate 3-octaprenyl-4-hydroxybenzoate. The sequence is that of 4-hydroxybenzoate octaprenyltransferase from Methylibium petroleiphilum (strain ATCC BAA-1232 / LMG 22953 / PM1).